The sequence spans 129 residues: uncharacterized protein (129 aa).

The segment at 44 to 63 (PYRAADRSNDQDNDRSGGNV) is disordered. Positions 46–58 (RAADRSNDQDNDR) are enriched in basic and acidic residues. The next 2 membrane-spanning stretches (helical) occupy residues 78-98 (IISL…VGYI) and 109-129 (AWAM…IPFF).

The protein resides in the cell membrane. This is an uncharacterized protein from Bacillus subtilis (strain 168).